An 87-amino-acid chain; its full sequence is RNA-binding protein Hfq (87 aa).

Residues 9 to 68 (DPFLNALRRERIPVSIYLVNGIKLQGQIESFDQFVILLKNTVNQMVYKHAISTVVPARPV) form the Sm domain. A disordered region spans residues 65 to 87 (ARPVSHHSGDRPQGDRPQEKSED). Basic and acidic residues predominate over residues 71-87 (HSGDRPQGDRPQEKSED).

The protein belongs to the Hfq family. Homohexamer.

RNA chaperone that binds small regulatory RNA (sRNAs) and mRNAs to facilitate mRNA translational regulation in response to envelope stress, environmental stress and changes in metabolite concentrations. Also binds with high specificity to tRNAs. The sequence is that of RNA-binding protein Hfq from Vibrio parahaemolyticus serotype O3:K6 (strain RIMD 2210633).